The sequence spans 518 residues: Putative malate dehydrogenase 1B (518 aa).

This sequence belongs to the LDH/MDH superfamily. MDH type 2 family.

In Homo sapiens (Human), this protein is Putative malate dehydrogenase 1B (MDH1B).